The primary structure comprises 132 residues: Small ribosomal subunit protein uS8 (132 aa).

It belongs to the universal ribosomal protein uS8 family. As to quaternary structure, part of the 30S ribosomal subunit. Contacts proteins S5 and S12.

In terms of biological role, one of the primary rRNA binding proteins, it binds directly to 16S rRNA central domain where it helps coordinate assembly of the platform of the 30S subunit. The sequence is that of Small ribosomal subunit protein uS8 from Streptococcus pyogenes serotype M49 (strain NZ131).